The chain runs to 265 residues: NAD kinase (265 aa).

Residue D45 is the Proton acceptor of the active site. NAD(+) is bound by residues 45 to 46, 121 to 122, R147, D149, 160 to 165, A184, and Q222; these read DG, NE, and TAYSKS.

Belongs to the NAD kinase family. Requires a divalent metal cation as cofactor.

The protein resides in the cytoplasm. It catalyses the reaction NAD(+) + ATP = ADP + NADP(+) + H(+). Functionally, involved in the regulation of the intracellular balance of NAD and NADP, and is a key enzyme in the biosynthesis of NADP. Catalyzes specifically the phosphorylation on 2'-hydroxyl of the adenosine moiety of NAD to yield NADP. The chain is NAD kinase from Lacticaseibacillus paracasei (strain ATCC 334 / BCRC 17002 / CCUG 31169 / CIP 107868 / KCTC 3260 / NRRL B-441) (Lactobacillus paracasei).